A 350-amino-acid chain; its full sequence is Anthranilate phosphoribosyltransferase (350 aa).

5-phospho-alpha-D-ribose 1-diphosphate contacts are provided by residues Gly-94, Gly-97–Asp-98, Thr-102, Asn-104–Thr-107, Lys-122–Ser-130, and Ser-134. Residue Gly-94 participates in anthranilate binding. Ser-106 contacts Mg(2+). Asn-125 is a binding site for anthranilate. Arg-180 is a binding site for anthranilate. Mg(2+)-binding residues include Asp-239 and Glu-240.

It belongs to the anthranilate phosphoribosyltransferase family. As to quaternary structure, homodimer. Requires Mg(2+) as cofactor.

The catalysed reaction is N-(5-phospho-beta-D-ribosyl)anthranilate + diphosphate = 5-phospho-alpha-D-ribose 1-diphosphate + anthranilate. Its pathway is amino-acid biosynthesis; L-tryptophan biosynthesis; L-tryptophan from chorismate: step 2/5. Functionally, catalyzes the transfer of the phosphoribosyl group of 5-phosphorylribose-1-pyrophosphate (PRPP) to anthranilate to yield N-(5'-phosphoribosyl)-anthranilate (PRA). The chain is Anthranilate phosphoribosyltransferase from Geotalea daltonii (strain DSM 22248 / JCM 15807 / FRC-32) (Geobacter daltonii).